Consider the following 1191-residue polypeptide: Putative glycoside hydrolase 22789 (1191 aa).

Over residues 173 to 187 (PSSSGASSVLPSPSA) the composition is skewed to low complexity. A disordered region spans residues 173-221 (PSSSGASSVLPSPSAHTPDAATDANHLPNPDPASGRQELTRAGRPARKK).

Belongs to the glycoside hydrolase-like 3 (GHL3) family.

This Monosiga brevicollis (Choanoflagellate) protein is Putative glycoside hydrolase 22789.